The primary structure comprises 58 residues: Small ribosomal subunit protein bS21 (58 aa).

Residues 27-58 form a disordered region; sequence GTLQELRKREHYEKPSVKRKRKSEAARKRKKY. The span at 31–42 shows a compositional bias: basic and acidic residues; the sequence is ELRKREHYEKPS. The segment covering 43 to 58 has biased composition (basic residues); that stretch reads VKRKRKSEAARKRKKY.

This sequence belongs to the bacterial ribosomal protein bS21 family.

This Lactococcus lactis subsp. lactis (strain IL1403) (Streptococcus lactis) protein is Small ribosomal subunit protein bS21 (rpsU).